A 364-amino-acid polypeptide reads, in one-letter code: Abhydrolase domain-containing protein C57A10.08c (364 aa).

The Cytoplasmic segment spans residues M1 to R8. Residues L9 to L29 form a helical; Signal-anchor for type II membrane protein membrane-spanning segment. Residues Y30 to I364 are Lumenal-facing. The active-site Charge relay system is S183. A glycan (N-linked (GlcNAc...) asparagine) is linked at N326. H336 (charge relay system) is an active-site residue.

It belongs to the AB hydrolase superfamily.

Its subcellular location is the endoplasmic reticulum membrane. The chain is Abhydrolase domain-containing protein C57A10.08c from Schizosaccharomyces pombe (strain 972 / ATCC 24843) (Fission yeast).